Consider the following 435-residue polypeptide: Nuclear hormone receptor family member nhr-28 (435 aa).

The nuclear receptor DNA-binding region spans 5–80 (KKPCSVCGEA…VGMRKSAVQR (76 aa)). 2 consecutive NR C4-type zinc fingers follow at residues 8–28 (CSVCGEAGDGAHFGAEACRAC) and 44–63 (CRAMGACIIQKNVRCMCRAC). The segment at 84–106 (LFGRQDSSDGSNPRVSPSTSWPM) is disordered. Residues 91-104 (SDGSNPRVSPSTSW) show a composition bias toward polar residues. One can recognise an NR LBD domain in the interval 113–374 (IEEPGMATLN…ETFYELVSGR (262 aa)).

This sequence belongs to the nuclear hormone receptor family.

The protein localises to the nucleus. Its function is as follows. Orphan nuclear receptor. The polypeptide is Nuclear hormone receptor family member nhr-28 (Caenorhabditis briggsae).